We begin with the raw amino-acid sequence, 300 residues long: Ribonuclease HIII (300 aa).

Positions 83-300 constitute an RNase H type-2 domain; that stretch reads IPIIGSDEVG…THKAQALLTK (218 aa). Positions 89, 90, and 194 each coordinate a divalent metal cation.

The protein belongs to the RNase HII family. RnhC subfamily. It depends on Mn(2+) as a cofactor. Requires Mg(2+) as cofactor.

It localises to the cytoplasm. It catalyses the reaction Endonucleolytic cleavage to 5'-phosphomonoester.. Endonuclease that specifically degrades the RNA of RNA-DNA hybrids. This Streptococcus pyogenes serotype M49 (strain NZ131) protein is Ribonuclease HIII.